Consider the following 455-residue polypeptide: Golgi pH regulator (455 aa).

Transmembrane regions (helical) follow at residues 5-25, 46-66, 79-99, 114-134, and 150-170; these read IDSS…WLFF, VTFA…LGVL, LCVI…YFIV, CLLW…FPIL, and VGVI…VNCP. 2 N-linked (GlcNAc...) asparagine glycosylation sites follow: asparagine 180 and asparagine 243. A run of 4 helical transmembrane segments spans residues 290–310, 343–363, 378–398, and 425–445; these read GYFF…NIVL, ISFI…LITL, VIVL…VLLI, and WFDV…YLAH.

This sequence belongs to the Golgi pH regulator (TC 1.A.38) family. In terms of assembly, homotrimer. Interacts with RABL3; the interaction stabilizes GPR89B.

Its subcellular location is the golgi apparatus membrane. It carries out the reaction iodide(out) = iodide(in). The catalysed reaction is chloride(in) = chloride(out). It catalyses the reaction bromide(in) = bromide(out). The enzyme catalyses fluoride(in) = fluoride(out). Voltage-gated channel that enables the transfer of anions such as iodide, chloride, bromide and fluoride which may function in counter-ion conductance and participates in Golgi acidification. Plays a role in lymphocyte development, probably by acting as a RABL3 effector in hematopoietic cells. The chain is Golgi pH regulator from Cricetulus griseus (Chinese hamster).